The following is a 249-amino-acid chain: Methyl-coenzyme M reductase subunit gamma (249 aa).

The segment at 43 to 62 (RAPGEEYPSVHPPLEELDEP) is disordered. Arg120 serves as a coordination point for coenzyme M.

Belongs to the methyl-coenzyme M reductase gamma subunit family. MCR is a hexamer of two alpha, two beta, and two gamma chains, forming a dimer of heterotrimers. Coenzyme F430 is required as a cofactor.

Its subcellular location is the cytoplasm. It carries out the reaction coenzyme B + methyl-coenzyme M = methane + coenzyme M-coenzyme B heterodisulfide. It participates in one-carbon metabolism; methyl-coenzyme M reduction; methane from methyl-coenzyme M: step 1/1. Its function is as follows. Component of the methyl-coenzyme M reductase (MCR) I that catalyzes the reductive cleavage of methyl-coenzyme M (CoM-S-CH3 or 2-(methylthio)ethanesulfonate) using coenzyme B (CoB or 7-mercaptoheptanoylthreonine phosphate) as reductant which results in the production of methane and the mixed heterodisulfide of CoB and CoM (CoM-S-S-CoB). This is the final step in methanogenesis. This is Methyl-coenzyme M reductase subunit gamma (mcrG) from Methanothermus fervidus.